We begin with the raw amino-acid sequence, 365 residues long: tRNA N6-adenosine threonylcarbamoyltransferase (365 aa).

Fe cation-binding residues include H122 and H126. Residues 147–151 (LVSGG), D180, G193, and N293 each bind substrate. A Fe cation-binding site is contributed by D321. Residues 340-365 (PNEIDTAARPRWPLSERTPATPEHVS) are disordered.

The protein belongs to the KAE1 / TsaD family. Requires Fe(2+) as cofactor.

It is found in the cytoplasm. The enzyme catalyses L-threonylcarbamoyladenylate + adenosine(37) in tRNA = N(6)-L-threonylcarbamoyladenosine(37) in tRNA + AMP + H(+). Its function is as follows. Required for the formation of a threonylcarbamoyl group on adenosine at position 37 (t(6)A37) in tRNAs that read codons beginning with adenine. Is involved in the transfer of the threonylcarbamoyl moiety of threonylcarbamoyl-AMP (TC-AMP) to the N6 group of A37, together with TsaE and TsaB. TsaD likely plays a direct catalytic role in this reaction. The polypeptide is tRNA N6-adenosine threonylcarbamoyltransferase (Gluconobacter oxydans (strain 621H) (Gluconobacter suboxydans)).